A 231-amino-acid chain; its full sequence is MSKLTKKQKKIAEVIKPNQLYTVADAVAILKQFASKKFRESLDISINLGVDPRKSDQVVRSSTNLPKGTGKTVRVAVFAQGDNAAKATAAGADIVGFEDLADKIKAGEMNFDVVIATPDAMRIVGQLGQILGPRGLMPNPKVGTVTTNVEAAVNDAKSGQVRYRTDKNGIIHCTVGKADFAPEDVLENVVALINDLKKAKPASSKGQYLKKISLSTTMGPGLPIDISSIPV.

The protein belongs to the universal ribosomal protein uL1 family. In terms of assembly, part of the 50S ribosomal subunit.

Binds directly to 23S rRNA. The L1 stalk is quite mobile in the ribosome, and is involved in E site tRNA release. Functionally, protein L1 is also a translational repressor protein, it controls the translation of the L11 operon by binding to its mRNA. This chain is Large ribosomal subunit protein uL1, found in Legionella pneumophila (strain Paris).